The sequence spans 372 residues: Queuine tRNA-ribosyltransferase (372 aa).

The Proton acceptor role is filled by D92. Residues 92-96 (DSGGY), D146, Q188, and G215 contribute to the substrate site. Positions 246–252 (GIGSLRE) are RNA binding. D265 functions as the Nucleophile in the catalytic mechanism. An RNA binding; important for wobble base 34 recognition region spans residues 270-274 (TRLGR). Residues C303, C305, C308, and H334 each contribute to the Zn(2+) site.

It belongs to the queuine tRNA-ribosyltransferase family. As to quaternary structure, homodimer. Within each dimer, one monomer is responsible for RNA recognition and catalysis, while the other monomer binds to the replacement base PreQ1. Requires Zn(2+) as cofactor.

The catalysed reaction is 7-aminomethyl-7-carbaguanine + guanosine(34) in tRNA = 7-aminomethyl-7-carbaguanosine(34) in tRNA + guanine. The protein operates within tRNA modification; tRNA-queuosine biosynthesis. Catalyzes the base-exchange of a guanine (G) residue with the queuine precursor 7-aminomethyl-7-deazaguanine (PreQ1) at position 34 (anticodon wobble position) in tRNAs with GU(N) anticodons (tRNA-Asp, -Asn, -His and -Tyr). Catalysis occurs through a double-displacement mechanism. The nucleophile active site attacks the C1' of nucleotide 34 to detach the guanine base from the RNA, forming a covalent enzyme-RNA intermediate. The proton acceptor active site deprotonates the incoming PreQ1, allowing a nucleophilic attack on the C1' of the ribose to form the product. After dissociation, two additional enzymatic reactions on the tRNA convert PreQ1 to queuine (Q), resulting in the hypermodified nucleoside queuosine (7-(((4,5-cis-dihydroxy-2-cyclopenten-1-yl)amino)methyl)-7-deazaguanosine). The sequence is that of Queuine tRNA-ribosyltransferase from Prochlorococcus marinus (strain MIT 9211).